The primary structure comprises 721 residues: Photosystem I P700 chlorophyll a apoprotein A1 (721 aa).

8 helical membrane-spanning segments follow: residues V61 to A84, L147 to H170, L186 to L210, T282 to Y300, W337 to Y360, L376 to V402, A424 to H446, and F522 to L540. Positions 564 and 573 each coordinate [4Fe-4S] cluster. 2 helical membrane passes run H580–W601 and L655–F677. Chlorophyll a' is bound at residue H666. M674 and Y682 together coordinate chlorophyll a. Position 683 (W683) interacts with phylloquinone. The chain crosses the membrane as a helical span at residues A715–Y721.

This sequence belongs to the PsaA/PsaB family. The PsaA/B heterodimer binds the P700 chlorophyll special pair and subsequent electron acceptors. PSI consists of a core antenna complex that captures photons, and an electron transfer chain that converts photonic excitation into a charge separation. The eukaryotic PSI reaction center is composed of at least 11 subunits. Requires P700 is a chlorophyll a/chlorophyll a' dimer, A0 is one or more chlorophyll a, A1 is one or both phylloquinones and FX is a shared 4Fe-4S iron-sulfur center. as cofactor.

It localises to the plastid. Its subcellular location is the chloroplast thylakoid membrane. It carries out the reaction reduced [plastocyanin] + hnu + oxidized [2Fe-2S]-[ferredoxin] = oxidized [plastocyanin] + reduced [2Fe-2S]-[ferredoxin]. PsaA and PsaB bind P700, the primary electron donor of photosystem I (PSI), as well as the electron acceptors A0, A1 and FX. PSI is a plastocyanin-ferredoxin oxidoreductase, converting photonic excitation into a charge separation, which transfers an electron from the donor P700 chlorophyll pair to the spectroscopically characterized acceptors A0, A1, FX, FA and FB in turn. Oxidized P700 is reduced on the lumenal side of the thylakoid membrane by plastocyanin. The chain is Photosystem I P700 chlorophyll a apoprotein A1 from Ginkgo biloba (Ginkgo).